The chain runs to 591 residues: Fanconi anemia group C protein homolog (591 aa).

As to quaternary structure, belongs to the multisubunit FA complex composed of FANCA, FANCB, FANCC, FANCE, FANCF, FANCG, FANCL/PHF9 and FANCM. This complex may also include HSP70. Interacts with ZBTB32. Upon IFNG induction, interacts with STAT1. Interacts with CDK1. Interacts with EIF2AK2. As to expression, ubiquitous.

It localises to the nucleus. The protein localises to the cytoplasm. Functionally, DNA repair protein that may operate in a postreplication repair or a cell cycle checkpoint function. May be implicated in interstrand DNA cross-link repair and in the maintenance of normal chromosome stability. Upon IFNG induction, may facilitate STAT1 activation by recruiting STAT1 to IFNGR1. The chain is Fanconi anemia group C protein homolog (Fancc) from Mus musculus (Mouse).